The primary structure comprises 133 residues: Large ribosomal subunit protein bL17 (133 aa).

It belongs to the bacterial ribosomal protein bL17 family. As to quaternary structure, part of the 50S ribosomal subunit. Contacts protein L32.

In Nitratidesulfovibrio vulgaris (strain ATCC 29579 / DSM 644 / CCUG 34227 / NCIMB 8303 / VKM B-1760 / Hildenborough) (Desulfovibrio vulgaris), this protein is Large ribosomal subunit protein bL17.